Here is a 2171-residue protein sequence, read N- to C-terminus: Voltage-dependent L-type calcium channel subunit alpha-1C (2171 aa).

The Cytoplasmic segment spans residues 1–154 (MLRALVQPAT…RACISIVEWK (154 aa)). Residues 77–98 (GAALSWQAAIDAARQAKLMGSA) are calmodulin-binding. The tract at residues 103-128 (ISTVSSTQRKRQQYGKPKKQGSTTAT) is disordered. Over residues 110-121 (QRKRQQYGKPKK) the composition is skewed to basic residues. Residues 141 to 438 (NPIRRACISI…LVLGVLSGEF (298 aa)) form an I repeat. Residues 155-173 (PFEIIILLTIFANCVALAI) form a helical membrane-spanning segment. At 174–188 (YIPFPEDDSNATNSN) the chain is on the extracellular side. An N-linked (GlcNAc...) asparagine glycan is attached at Asn-183. A helical membrane pass occupies residues 189–209 (LERVEYLFLIIFTVEAFLKVI). Residues 210–218 (AYGLLFHPN) lie on the Cytoplasmic side of the membrane. A helical membrane pass occupies residues 219-239 (AYLRNGWNLLDFIIVVVGLFS). The Extracellular portion of the chain corresponds to 240–262 (AILEQATKADGANALGGKGAGFD). The chain crosses the membrane as a helical span at residues 263–281 (VKALRAFRVLRPLRLVSGV). Over 282-298 (PSLQVVLNSIIKAMVPL) the chain is Cytoplasmic. The chain crosses the membrane as a helical span at residues 299–320 (LHIALLVLFVIIIYAIIGLELF). Over 321–380 (MGKMHKTCYNQEGVADVPAEDDPSPCALETGHGRQCQNGTVCKPGWDGPKHGITNFDNFA) the chain is Extracellular. Disulfide bonds link Cys-328/Cys-356 and Cys-346/Cys-362. Asn-358 is a glycosylation site (N-linked (GlcNAc...) asparagine). The pore-forming intramembrane region spans 381–402 (FAMLTVFQCITMEGWTDVLYWM). The short motif at 391-394 (TMEG) is the Selectivity filter of repeat I element. Glu-393 provides a ligand contact to Ca(2+). At 403 to 410 (QDAMGYEL) the chain is on the extracellular side. A helical transmembrane segment spans residues 411–431 (PWVYFVSLVIFGSFFVLNLVL). Residues 432-554 (GVLSGEFSKE…RKCRAAVKSN (123 aa)) lie on the Cytoplasmic side of the membrane. The interval 458–475 (QQLEEDLKGYLDWITQAE) is AID/alpha-interaction domain; mediates interaction with the beta subunit. Positions 479–511 (PENEDEGMDEEKPRNMSMPTSETESVNTENVAG) are disordered. Over residues 495 to 508 (SMPTSETESVNTEN) the composition is skewed to polar residues. Ser-499 is subject to Phosphoserine. Thr-506 is modified (phosphothreonine). The II repeat unit spans residues 540-786 (NRFCRRKCRA…VFLAIAVDNL (247 aa)). The chain crosses the membrane as a helical span at residues 555-573 (VFYWLVIFLVFLNTLTIAS). Residues 574 to 584 (EHYNQPHWLTE) lie on the Extracellular side of the membrane. A helical membrane pass occupies residues 585–605 (VQDTANKALLALFTAEMLLKM). Residues 606–616 (YSLGLQAYFVS) lie on the Cytoplasmic side of the membrane. Residues 617–636 (LFNRFDCFIVCGGILETILV) traverse the membrane as a helical segment. The Extracellular segment spans residues 637–645 (ETKVMSPLG). The chain crosses the membrane as a helical span at residues 646–664 (ISVLRCVRLLRIFKITRYW). Over 665-683 (NSLSNLVASLLNSVRSIAS) the chain is Cytoplasmic. Residues 684–703 (LLLLLFLFIIIFSLLGMQLF) form a helical membrane-spanning segment. The Extracellular segment spans residues 704–723 (GGKFNFDEMQTRRSTFDNFP). Positions 724–745 (QSLLTVFQILTGEDWNSVMYDG) form an intramembrane region, pore-forming. Residues 734 to 737 (TGED) carry the Selectivity filter of repeat II motif. Glu-736 contributes to the Ca(2+) binding site. Residues 746 to 755 (IMAYGGPSFP) are Extracellular-facing. Residues 756 to 775 (GMLVCIYFIILFICGNYILL) form a helical membrane-spanning segment. Over 776–930 (NVFLAIAVDN…LQCHRIVNDT (155 aa)) the chain is Cytoplasmic. The disordered stretch occupies residues 794 to 891 (SAQKEEEEEK…EMPVGPRPRP (98 aa)). A compositionally biased stretch (basic and acidic residues) spans 813 to 836 (SPEKKQEVVGKPALEEAKEEKIEL). A phosphoserine mark is found at Ser-838 and Ser-845. The segment at 859 to 906 (NESEDKSPYPNPETTGEEDEEEPEMPVGPRPRPLSELHLKEKAVPMPE) is interaction with STAC2. Over residues 873–882 (TGEEDEEEPE) the composition is skewed to acidic residues. An III repeat occupies 917 to 1199 (NRFRLQCHRI…IFVGFVIVTF (283 aa)). The helical transmembrane segment at 931 to 949 (IFTNLILFFILLSSISLAA) threads the bilayer. The Extracellular segment spans residues 950-961 (EDPVQHTSFRNH). The chain crosses the membrane as a helical span at residues 962-981 (ILFYFDIVFTTIFTIEIALK). Residues 982 to 997 (MTAYGAFLHKGSFCRN) are Cytoplasmic-facing. The helical transmembrane segment at 998 to 1016 (YFNILDLLVVSVSLISFGI) threads the bilayer. Residues 1017–1023 (QSSAINV) lie on the Extracellular side of the membrane. A helical membrane pass occupies residues 1024-1042 (VKILRVLRVLRPLRAINRA). Over 1043–1061 (KGLKHVVQCVFVAIRTIGN) the chain is Cytoplasmic. The helical transmembrane segment at 1062-1081 (IVIVTTLLQFMFACIGVQLF) threads the bilayer. Residues 1082–1131 (KGKLYTCSDSSKQTEAECKGNYITYKDGEVDHPIIQPRSWENSKFDFDNV) are Extracellular-facing. Residues Cys-1088 and Cys-1099 are joined by a disulfide bond. Residues 1119–1208 (RSWENSKFDF…FQEQGEQEYK (90 aa)) form a dihydropyridine binding region. Residues 1132-1152 (LAAMMALFTVSTFEGWPELLY) constitute an intramembrane region (pore-forming). Positions 1143–1146 (TFEG) match the Selectivity filter of repeat III motif. Position 1145 (Glu-1145) interacts with Ca(2+). Residues 1153–1169 (RSIDSHTEDKGPIYNYR) lie on the Extracellular side of the membrane. Residues 1170 to 1191 (VEISIFFIIYIIIIAFFMMNIF) traverse the membrane as a helical segment. Over 1192-1249 (VGFVIVTFQEQGEQEYKNCELDKNQRQCVEYALKARPLRRYIPKNQHQYKVWYVVNST) the chain is Cytoplasmic. The stretch at 1236–1509 (NQHQYKVWYV…LFVAVIMDNF (274 aa)) is one IV repeat. The helical transmembrane segment at 1250-1271 (YFEYLMFVLILLNTICLAMQHY) threads the bilayer. Over 1272–1279 (GQSCLFKI) the chain is Extracellular. The chain crosses the membrane as a helical span at residues 1280–1301 (AMNILNMLFTGLFTVEMILKLI). Topologically, residues 1302–1311 (AFKPKGYFSD) are cytoplasmic. Residues 1312–1331 (PWNVFDFLIVIGSIIDVILS) form a helical membrane-spanning segment. The Extracellular portion of the chain corresponds to 1332–1354 (ETNPAEHTQCSPSMNAEENSRIS). The chain crosses the membrane as a helical span at residues 1355-1373 (ITFFRLFRVMRLVKLLSRG). Topologically, residues 1374 to 1391 (EGIRTLLWTFIKSFQALP) are cytoplasmic. Residues 1392 to 1412 (YVALLIVMLFFIYAVIGMQVF) form a helical membrane-spanning segment. Residues 1413–1434 (GKIALNDTTEINRNNNFQTFPQ) lie on the Extracellular side of the membrane. N-linked (GlcNAc...) asparagine glycosylation is present at Asn-1418. The segment at residues 1435–1453 (AVLLLFRCATGEAWQDIML) is an intramembrane region (pore-forming). The Selectivity filter of repeat IV signature appears at 1444–1447 (TGEA). Topologically, residues 1454-1481 (ACMPGKKCAPESEPHNSTEGETPCGSSF) are extracellular. The interval 1460–1528 (KCAPESEPHN…LGPHHLDEFK (69 aa)) is dihydropyridine binding. A disulfide bridge connects residues Cys-1461 and Cys-1477. A glycan (N-linked (GlcNAc...) asparagine) is linked at Asn-1469. The phenylalkylamine binding stretch occupies residues 1474-1516 (ETPCGSSFAVFYFISFYMLCAFLIINLFVAVIMDNFDYLTRDW). Residues 1482–1506 (AVFYFISFYMLCAFLIINLFVAVIM) form a helical membrane-spanning segment. Residues 1507 to 2171 (DNFDYLTRDW…ADRRAGVSSL (665 aa)) lie on the Cytoplasmic side of the membrane. The important for interaction with STAC1, STAC2 and STAC3 stretch occupies residues 1641–1668 (DEVTVGKFYATFLIQEYFRKFKKRKEQG). Positions 1647–1667 (KFYATFLIQEYFRKFKKRKEQ) are calmodulin-binding IQ region. Positions 1681–1700 (LQAGLRTLHDIGPEIRRAIS) are important for localization in at the junctional membrane. A phosphoserine mark is found at Ser-1700 and Ser-1721. A disordered region spans residues 1760-1797 (ISKAGNNQGDTESPSHEKLVDSTFTPSSYSSTGSNANI). The span at 1781 to 1793 (STFTPSSYSSTGS) shows a compositional bias: polar residues. Ser-1928 carries the phosphoserine; by PKA modification. Disordered stretches follow at residues 1971-2014 (RSHS…EKLN), 2026-2060 (SGENSPCRGDSSAARRARPVSLTVPSQAGAQGRQF), and 2114-2155 (SGGA…PGCG). Residues 2130-2140 (NRRDPGRDRAG) are compositionally biased toward basic and acidic residues.

This sequence belongs to the calcium channel alpha-1 subunit (TC 1.A.1.11) family. CACNA1C subfamily. Component of a calcium channel complex consisting of a pore-forming alpha subunit (CACNA1C) and ancillary beta, gamma and delta subunits. The channel complex contains alpha, beta, gamma and delta subunits in a 1:1:1:1 ratio, i.e. it contains only one of each type of subunit. CACNA1C channel activity is modulated by ancillary subunits, such as CACNB1, CACNB2, CACNB3, CACNA2D1 and CACNA2D4. Interacts with CACNB1. Interacts with CACNB2. Identified in a complex with CACNA2D4 and CACNB3. Interacts with CACNB3. Interacts with CACNA2D1. Interacts with the gamma subunits CACNG4, CACNG6, CACNG7 and CACNG8. Interacts with CACNA2D4. Interacts with CALM1. Interacts (via the N-terminus and the C-terminal C and IQ motifs) with CABP1; this inhibits Ca(2+)-dependent channel inactivation. The binding via the C motif is calcium independent whereas the binding via IQ requires the presence of calcium and is mutually exclusive with calmodulin binding. The binding to the cytoplasmic N-terminal domain is calcium independent but is essential for the channel modulation. Interacts (via C-terminal CDB motif) with CABP5; in a calcium-dependent manner. Interacts with CIB1; the interaction increases upon cardiomyocytes hypertrophy. Interacts with STAC1, STAC2 and STAC3; this inhibits channel inactivation, probably by hindering CALM1 binding. Post-translationally, phosphorylation by PKA at Ser-1928 activates the channel. Elevated levels of blood glucose lead to increased phosphorylation by PKA. In terms of tissue distribution, expression in cardiac muscle. In lung, expressed in airway and vascular smooth muscle cells.

The protein resides in the cell membrane. It is found in the sarcolemma. The protein localises to the perikaryon. Its subcellular location is the postsynaptic density membrane. It localises to the cell projection. The protein resides in the dendrite. It is found in the T-tubule. It catalyses the reaction Ca(2+)(in) = Ca(2+)(out). Its activity is regulated as follows. Inhibited by dihydropyridines (DHP), such as isradipine. Inhibited by nifedipine. Channel activity is regulated by Ca(2+) and calmodulin. Binding of STAC1, STAC2 or STAC3 to a region that overlaps with the calmodulin binding site inhibits channel inactivation by Ca(2+) and calmodulin. Binding of calmodulin or CABP1 at the same regulatory sites results in opposite effects on the channel function. Shear stress and pressure increases calcium channel activity. Functionally, pore-forming, alpha-1C subunit of the voltage-gated calcium channel that gives rise to L-type calcium currents. Mediates influx of calcium ions into the cytoplasm, and thereby triggers calcium release from the sarcoplasm. Plays an important role in excitation-contraction coupling in the heart. Required for normal heart development and normal regulation of heart rhythm. Required for normal contraction of smooth muscle cells in blood vessels and in the intestine. Essential for normal blood pressure regulation via its role in the contraction of arterial smooth muscle cells. Long-lasting (L-type) calcium channels belong to the 'high-voltage activated' (HVA) group. This chain is Voltage-dependent L-type calcium channel subunit alpha-1C (CACNA1C), found in Oryctolagus cuniculus (Rabbit).